The chain runs to 131 residues: Large ribosomal subunit protein bL21 (131 aa).

The tract at residues 111-131 (VAAATGTADARRAAHNASAKE) is disordered.

The protein belongs to the bacterial ribosomal protein bL21 family. In terms of assembly, part of the 50S ribosomal subunit. Contacts protein L20.

Its function is as follows. This protein binds to 23S rRNA in the presence of protein L20. This chain is Large ribosomal subunit protein bL21, found in Cereibacter sphaeroides (strain ATCC 17029 / ATH 2.4.9) (Rhodobacter sphaeroides).